We begin with the raw amino-acid sequence, 430 residues long: Dihydroorotase (430 aa).

2 residues coordinate Zn(2+): histidine 61 and histidine 63. Substrate-binding positions include 63 to 65 (HLR) and asparagine 95. Residues aspartate 153, histidine 180, and histidine 233 each contribute to the Zn(2+) site. Asparagine 279 is a binding site for substrate. Aspartate 306 serves as a coordination point for Zn(2+). The active site involves aspartate 306. Histidine 310 serves as a coordination point for substrate.

Belongs to the metallo-dependent hydrolases superfamily. DHOase family. Class I DHOase subfamily. It depends on Zn(2+) as a cofactor.

It catalyses the reaction (S)-dihydroorotate + H2O = N-carbamoyl-L-aspartate + H(+). It participates in pyrimidine metabolism; UMP biosynthesis via de novo pathway; (S)-dihydroorotate from bicarbonate: step 3/3. In terms of biological role, catalyzes the reversible cyclization of carbamoyl aspartate to dihydroorotate. This is Dihydroorotase from Caldicellulosiruptor saccharolyticus (strain ATCC 43494 / DSM 8903 / Tp8T 6331).